The sequence spans 391 residues: Homocysteine-responsive endoplasmic reticulum-resident ubiquitin-like domain member 1 protein (391 aa).

Methionine 1 is modified (N-acetylmethionine). The Cytoplasmic segment spans residues 1-263 (MESETEPEPV…VEEDDEINRD (263 aa)). The Ubiquitin-like domain maps to 10 to 72 (VTLLVKSPNQ…LLDHQCLRDL (63 aa)). The segment at 100-126 (KVAESTEEPAGSNRGQYPEDSSSDGLR) is disordered. Positions 112–124 (NRGQYPEDSSSDG) are enriched in polar residues. The interaction with UBQLN1 stretch occupies residues 115-200 (QYPEDSSSDG…ASGAFVPPPS (86 aa)). Serine 135 carries the phosphoserine modification. Positions 170 to 190 (LSWFQQIYARQYYMQYLAATA) are interaction with SYVN1. The chain crosses the membrane as a helical span at residues 264–284 (WLDWTYSAATFSVFLSILYFY). Topologically, residues 285–289 (SSLSR) are lumenal. A helical transmembrane segment spans residues 290-310 (FLMVMGATVVMYLHHVGWFPF). At 311-391 (RPRPVQNFPN…LPEGPPAIAN (81 aa)) the chain is on the cytoplasmic side. Positions 318–359 (FPNDGPPPDVVNQDPNNNLQEGTDPETEDPNHLPPDRDVLDG) are disordered. Basic and acidic residues predominate over residues 346–357 (DPNHLPPDRDVL).

In terms of assembly, interacts with PSEN1 and PSEN2. Interacts with UBXN6. Interacts with UBQLN1, UBQLN2 and UBQLN4. Component of the HRD1 complex, which comprises at least SYNV1/HRD1, FAM8A1, HERPUD1/HERP, OS9, SEL1L and UBE2J1. FAM8A1 binding to SYNV1 may promote recruitment of HERPUD1 to the HRD1 complex. Widely expressed; in the brain, expression seems to be restricted to neurons and vascular smooth muscle cells. Present in activated microglia in senile plaques in the brain of patients with Alzheimer disease.

It localises to the endoplasmic reticulum membrane. In terms of biological role, component of the endoplasmic reticulum quality control (ERQC) system also called ER-associated degradation (ERAD) involved in ubiquitin-dependent degradation of misfolded endoplasmic reticulum proteins. Could enhance presenilin-mediated amyloid-beta protein 40 generation. Binds to ubiquilins and this interaction is required for efficient degradation of CD3D via the ERAD pathway. The sequence is that of Homocysteine-responsive endoplasmic reticulum-resident ubiquitin-like domain member 1 protein (HERPUD1) from Homo sapiens (Human).